The sequence spans 252 residues: Trans-aconitate 2-methyltransferase (252 aa).

It belongs to the methyltransferase superfamily. Tam family.

The protein resides in the cytoplasm. The enzyme catalyses trans-aconitate + S-adenosyl-L-methionine = (E)-3-(methoxycarbonyl)pent-2-enedioate + S-adenosyl-L-homocysteine. Functionally, catalyzes the S-adenosylmethionine monomethyl esterification of trans-aconitate. The polypeptide is Trans-aconitate 2-methyltransferase (Shigella dysenteriae serotype 1 (strain Sd197)).